A 314-amino-acid chain; its full sequence is NADH-ubiquinone oxidoreductase chain 1 (314 aa).

The next 8 membrane-spanning stretches (helical) occupy residues 5 to 25 (IMPL…VAFL), 78 to 98 (FSPV…PYLI), 105 to 125 (LGVL…MIAG), 152 to 172 (ALIL…SFYF), 176 to 196 (YVWF…SCLA), 227 to 247 (LIFL…VVIF), 251 to 271 (DIYS…FIWV), and 294 to 314 (LSLN…SLLF).

Belongs to the complex I subunit 1 family.

The protein resides in the mitochondrion inner membrane. It carries out the reaction a ubiquinone + NADH + 5 H(+)(in) = a ubiquinol + NAD(+) + 4 H(+)(out). Functionally, core subunit of the mitochondrial membrane respiratory chain NADH dehydrogenase (Complex I) that is believed to belong to the minimal assembly required for catalysis. Complex I functions in the transfer of electrons from NADH to the respiratory chain. The immediate electron acceptor for the enzyme is believed to be ubiquinone. The polypeptide is NADH-ubiquinone oxidoreductase chain 1 (mt:ND1) (Anopheles gambiae (African malaria mosquito)).